Consider the following 72-residue polypeptide: MAKEESIEIEGVILEALPNAQFKVELENGLVVLAHVSGKIRMHYIRILPGDKVKVQISPYDISKGRITYRYK.

In terms of domain architecture, S1-like spans 1–72 (MAKEESIEIE…SKGRITYRYK (72 aa)).

Belongs to the IF-1 family. Component of the 30S ribosomal translation pre-initiation complex which assembles on the 30S ribosome in the order IF-2 and IF-3, IF-1 and N-formylmethionyl-tRNA(fMet); mRNA recruitment can occur at any time during PIC assembly.

It is found in the cytoplasm. Its function is as follows. One of the essential components for the initiation of protein synthesis. Stabilizes the binding of IF-2 and IF-3 on the 30S subunit to which N-formylmethionyl-tRNA(fMet) subsequently binds. Helps modulate mRNA selection, yielding the 30S pre-initiation complex (PIC). Upon addition of the 50S ribosomal subunit IF-1, IF-2 and IF-3 are released leaving the mature 70S translation initiation complex. The protein is Translation initiation factor IF-1 of Chlorobium phaeovibrioides (strain DSM 265 / 1930) (Prosthecochloris vibrioformis (strain DSM 265)).